A 713-amino-acid chain; its full sequence is Pro-neuregulin-3, membrane-bound isoform (713 aa).

The Extracellular segment spans residues 1-362 (MSEGAAGASP…MESEDVYQRQ (362 aa)). Disordered stretches follow at residues 28–48 (AAAAAAAGGGPDGGGEGAAEP), 119–220 (SSFP…STQA), and 251–282 (AAASSSSPSSTSSTTTTPETSTSPKFHTTTYS). Over residues 34–44 (AGGGPDGGGEG) the composition is skewed to gly residues. A compositionally biased stretch (low complexity) spans 127–148 (TTTTTTSTTSPATPSAGGAASS). Over residues 149-163 (RTPNRISTRLTTITR) the composition is skewed to polar residues. 2 stretches are compositionally biased toward low complexity: residues 195–207 (STTAPFFSSSTPG) and 254–274 (SSSSPSSTSSTTTTPETSTSP). Residues 288–331 (HFKPCRDKDLAYCLNDGECFVIETLTGSHKHCRCKEGYQGVRCD) form the EGF-like domain. Disulfide bonds link C292–C306, C300–C319, and C321–C330. Residues 363–383 (VLSISCIIFGIVIVGMFCAAF) form a helical membrane-spanning segment. Residues 384–713 (YFKSKKQAKQ…EIQRDSVLTK (330 aa)) lie on the Cytoplasmic side of the membrane. The disordered stretch occupies residues 449 to 496 (SAPQSFPEVTSPDRGSQPIKHHSPGQRSGMLHRNTFRRAPPSPRSRLG).

This sequence belongs to the neuregulin family. Interacts with ERBB4. Post-translationally, proteolytic cleavage close to the plasma membrane on the external face leads to the release of the soluble growth factor form. Extensive glycosylation precedes the proteolytic cleavage. In terms of tissue distribution, expressed in sympathetic, motor, and sensory neurons.

It is found in the cell membrane. The protein resides in the secreted. Direct ligand for the ERBB4 tyrosine kinase receptor. Binding results in ligand-stimulated tyrosine phosphorylation and activation of the receptor. Does not bind to the EGF receptor, ERBB2 or ERBB3 receptors. The sequence is that of Pro-neuregulin-3, membrane-bound isoform (Nrg3) from Mus musculus (Mouse).